The chain runs to 251 residues: Maleate isomerase (251 aa).

Residues asparagine 15, 81–83 (CLV), tyrosine 138, and asparagine 168 each bind substrate. The active-site Nucleophile is the cysteine 81. Cysteine 81 carries the S-(2-succinyl)cysteine modification. Cysteine 199 acts as the Proton donor in catalysis. Position 200–201 (200–201 (VQ)) interacts with substrate.

This sequence belongs to the maleate isomerase family. In terms of assembly, homodimer.

It carries out the reaction maleate = fumarate. Functionally, catalyzes cis-trans isomerization of the C2-C3 double bond in maleate to yield fumarate. This Geobacillus stearothermophilus (Bacillus stearothermophilus) protein is Maleate isomerase.